Reading from the N-terminus, the 468-residue chain is Immunoglobulin superfamily member 21 (468 aa).

Residues 1 to 24 (MRAAPSLRRASCLLLAAILDLARG) form the signal peptide. Ig-like domains are found at residues 25-132 (YLTV…VVLA) and 344-429 (PKIM…TRLI). A disulfide bond links Cys46 and Cys116.

As to quaternary structure, interacts (Ig-like 1 domain) with NRXN2 (via Laminin G-like 1 domain) in a trans-interaction manner. As to expression, expressed in brain.

It is found in the postsynaptic cell membrane. In terms of biological role, involved in synaptic inhibition in the brain. Selectively regulates inhibitory presynaptic differentiation through interacting with presynaptic NRXN2. This is Immunoglobulin superfamily member 21 from Rattus norvegicus (Rat).